A 331-amino-acid chain; its full sequence is Neurogenic differentiation factor 4 (331 aa).

Residues 1–80 (MSKTFVKSKE…GPKKKKMTKA (80 aa)) form a disordered region. Residues 52 to 64 (DSIEEEEEEEEDG) show a composition bias toward acidic residues. Basic residues predominate over residues 67-79 (PKRRGPKKKKMTK). Positions 87–139 (ARRVKANARERTRMHGLNDALDNLRRVMPCYSKTQKLSKIETLRLARNYIWAL) constitute a bHLH domain. Residues 246 to 265 (TPPYEGPLTPPLSISGNFSL) are disordered.

In terms of assembly, efficient DNA binding requires dimerization with another bHLH protein. In terms of processing, serine or threonine phosphorylation within the basic region may regulate neurogenic activity.

Its subcellular location is the nucleus. Its function is as follows. Probably acts as a transcriptional activator. Mediates neuronal differentiation. Required for the regulation of amacrine cell fate specification in the retina. The chain is Neurogenic differentiation factor 4 (NEUROD4) from Homo sapiens (Human).